The chain runs to 288 residues: NH(3)-dependent NAD(+) synthetase (288 aa).

46–53 is a binding site for ATP; that stretch reads GISGGQDS. Residue Asp52 coordinates Mg(2+). Arg153 lines the deamido-NAD(+) pocket. ATP is bound at residue Thr173. A Mg(2+)-binding site is contributed by Glu178. Residues Lys186 and Asp193 each contribute to the deamido-NAD(+) site. Residues Lys202 and Thr224 each contribute to the ATP site. Position 273-274 (273-274) interacts with deamido-NAD(+); it reads HK.

It belongs to the NAD synthetase family. In terms of assembly, homodimer.

The enzyme catalyses deamido-NAD(+) + NH4(+) + ATP = AMP + diphosphate + NAD(+) + H(+). It functions in the pathway cofactor biosynthesis; NAD(+) biosynthesis; NAD(+) from deamido-NAD(+) (ammonia route): step 1/1. Functionally, catalyzes the ATP-dependent amidation of deamido-NAD to form NAD. Uses ammonia as a nitrogen source. The polypeptide is NH(3)-dependent NAD(+) synthetase (Deinococcus geothermalis (strain DSM 11300 / CIP 105573 / AG-3a)).